We begin with the raw amino-acid sequence, 145 residues long: Large ribosomal subunit protein bL19 (145 aa).

The protein belongs to the bacterial ribosomal protein bL19 family.

In terms of biological role, this protein is located at the 30S-50S ribosomal subunit interface and may play a role in the structure and function of the aminoacyl-tRNA binding site. The chain is Large ribosomal subunit protein bL19 from Brachyspira hyodysenteriae (strain ATCC 49526 / WA1).